Consider the following 191-residue polypeptide: Cytochrome c oxidase assembly protein CtaG (191 aa).

Residues 1–9 (MSLSPHQKT) are Cytoplasmic-facing. Residues 10 to 30 (AGGLVLVVAVMGAASFAAVPF) traverse the membrane as a helical; Signal-anchor for type II membrane protein segment. The Periplasmic portion of the chain corresponds to 31 to 191 (YNWFCRVTGF…LAAESATDVN (161 aa)).

Belongs to the COX11/CtaG family.

The protein resides in the cell inner membrane. Functionally, exerts its effect at some terminal stage of cytochrome c oxidase synthesis, probably by being involved in the insertion of the copper B into subunit I. This is Cytochrome c oxidase assembly protein CtaG from Cereibacter sphaeroides (strain ATCC 17029 / ATH 2.4.9) (Rhodobacter sphaeroides).